Reading from the N-terminus, the 229-residue chain is Aldehyde oxidoreductase iron-sulfur-binding subunit PaoA (229 aa).

A disordered region spans residues 1-21 (MSNQGEYPEDNRVGKHEPHDL). A signal peptide (tat-type signal) is located at residues 1 to 53 (MSNQGEYPEDNRVGKHEPHDLSLTRRDLIKVSAATAAAAVVYPHSTLAASVPA). Residues 9-21 (EDNRVGKHEPHDL) show a composition bias toward basic and acidic residues. In terms of domain architecture, 2Fe-2S ferredoxin-type spans 61 to 137 (MPLTLKVNGK…GAEITTIEGL (77 aa)). [2Fe-2S] cluster-binding residues include C99, C104, G105, C107, C119, C158, C161, C208, and C210.

As to quaternary structure, heterotrimer composed of PaoA, PaoB and PaoC. It depends on [2Fe-2S] cluster as a cofactor. Post-translationally, exported by the Tat system. The position of the signal peptide cleavage has not been experimentally proven.

Its subcellular location is the periplasm. The catalysed reaction is an aldehyde + A + H2O = a carboxylate + AH2 + H(+). Functionally, oxidizes aldehydes to the corresponding carboxylic acids with a preference for aromatic aldehydes. It might play a role in the detoxification of aldehydes to avoid cell damage. The polypeptide is Aldehyde oxidoreductase iron-sulfur-binding subunit PaoA (Escherichia coli O157:H7).